The chain runs to 301 residues: HTH-type transcriptional regulator EstR (301 aa).

An HTH lysR-type domain is found at 5–62 (PSLRQLSYLVTLSETLHFTEAARRSFVTQSTLSGGIMELERLLGGVLVERDRQNVRLT). A DNA-binding region (H-T-H motif) is located at residues 22 to 41 (FTEAARRSFVTQSTLSGGIM).

This sequence belongs to the LysR transcriptional regulatory family.

In terms of biological role, transcriptional regulator of the esterase operon. The protein is HTH-type transcriptional regulator EstR (estR) of Acinetobacter baylyi (strain ATCC 33305 / BD413 / ADP1).